Reading from the N-terminus, the 702-residue chain is Elongation factor G (702 aa).

Residues 8–286 (DKVRNIGIIA…AVVEYLPSPL (279 aa)) enclose the tr-type G domain. GTP is bound by residues 17–24 (AHIDAGKT), 85–89 (DTPGH), and 139–142 (NKMD).

Belongs to the TRAFAC class translation factor GTPase superfamily. Classic translation factor GTPase family. EF-G/EF-2 subfamily.

The protein resides in the cytoplasm. In terms of biological role, catalyzes the GTP-dependent ribosomal translocation step during translation elongation. During this step, the ribosome changes from the pre-translocational (PRE) to the post-translocational (POST) state as the newly formed A-site-bound peptidyl-tRNA and P-site-bound deacylated tRNA move to the P and E sites, respectively. Catalyzes the coordinated movement of the two tRNA molecules, the mRNA and conformational changes in the ribosome. The chain is Elongation factor G from Chloroflexus aurantiacus (strain ATCC 29366 / DSM 635 / J-10-fl).